The chain runs to 530 residues: Phosphoenolpyruvate carboxykinase (ATP) (530 aa).

Substrate is bound by residues R58, Y195, and K201. ATP-binding positions include K201, H220, and 236 to 244; that span reads GLSGTGKTT. Residues K201 and H220 each coordinate Mn(2+). Residue D257 participates in Mn(2+) binding. Residues E285, R321, 440–441, and T446 contribute to the ATP site; that span reads RI. Substrate is bound at residue R321.

It belongs to the phosphoenolpyruvate carboxykinase (ATP) family. Requires Mn(2+) as cofactor.

The protein localises to the cytoplasm. It catalyses the reaction oxaloacetate + ATP = phosphoenolpyruvate + ADP + CO2. It functions in the pathway carbohydrate biosynthesis; gluconeogenesis. Its function is as follows. Involved in the gluconeogenesis. Catalyzes the conversion of oxaloacetate (OAA) to phosphoenolpyruvate (PEP) through direct phosphoryl transfer between the nucleoside triphosphate and OAA. In Staphylococcus epidermidis (strain ATCC 12228 / FDA PCI 1200), this protein is Phosphoenolpyruvate carboxykinase (ATP).